We begin with the raw amino-acid sequence, 462 residues long: 3-ketoacyl-CoA thiolase 2, peroxisomal (462 aa).

A peroxisome-targeting transit peptide spans methionine 1–cysteine 34. Cysteine 138 acts as the Acyl-thioester intermediate in catalysis. Cysteine 138 and cysteine 192 are oxidised to a cystine. Catalysis depends on proton acceptor residues histidine 393 and cysteine 425.

It belongs to the thiolase-like superfamily. Thiolase family. As to quaternary structure, forms homodimers. As to expression, accumulates in etiolated cotyledons and in seedlings, also present in roots, flowers and siliques (at protein level). High levels in wounded leaves.

It localises to the peroxisome. The protein localises to the glyoxysome. It carries out the reaction an acyl-CoA + acetyl-CoA = a 3-oxoacyl-CoA + CoA. It functions in the pathway lipid metabolism; fatty acid metabolism. Involved in long chain fatty-acid beta-oxidation prior to gluconeogenesis during germination and subsequent seedling growth. Confers sensitivity to 2,4-dichlorophenoxybutiric acid (2,4-DB). Required for local and systemic induction of jasmonic acid (JA) biosynthesis after wounding. Seems to be involved in JA biosynthesis during senescence. May be involved in the positive regulation of abscisic acid-activated signaling pathway. In Arabidopsis thaliana (Mouse-ear cress), this protein is 3-ketoacyl-CoA thiolase 2, peroxisomal (PED1).